The sequence spans 304 residues: Ring-infected erythrocyte surface antigen (304 aa).

N-linked (GlcNAc...) asparagine glycans are attached at residues asparagine 18 and asparagine 22. Basic and acidic residues predominate over residues 142 to 159; the sequence is EHDAEENVEHDAEENVEH. Positions 142 to 304 are disordered; that stretch reads EHDAEENVEH…EENVEEHNGI (163 aa). Over residues 160-298 the composition is skewed to acidic residues; sequence DAEENAEENV…NVEEYDEENV (139 aa).

It localises to the cell membrane. In terms of biological role, may disrupt the normal intermolecular interactions of the cytoplasmic domain of band 3 and thereby facilitate the invagination of the red cell membrane which is necessary for the formation of the parasitophorous vacuole. The polypeptide is Ring-infected erythrocyte surface antigen (RESA) (Plasmodium falciparum (isolate Palo Alto / Uganda)).